Here is a 66-residue protein sequence, read N- to C-terminus: MVLRQLSRQASVKVGKTWTGTKKRAQRIFIFILELLLEFCRGEDSVDGKNKSTTALPAVKDSVKDS.

Over 1-27 (MVLRQLSRQASVKVGKTWTGTKKRAQR) the chain is Cytoplasmic. Phosphoserine; by host is present on residues S7 and S11. A Phosphothreonine; by host modification is found at T21. The helical; Signal-anchor for type II membrane protein transmembrane segment at 28-44 (IFIFILELLLEFCRGED) threads the bilayer. Topologically, residues 45-66 (SVDGKNKSTTALPAVKDSVKDS) are extracellular.

Belongs to the polyomavirus agnoprotein family. In terms of assembly, homooligomer. Interacts with VP1. Interacts with large T antigen; this interaction may impact upon the activity of T-antigen on the control of viral gene transcription and replication. Interacts with small t antigen. Interacts with host CBX5; this interaction induces the dissociation of CBX5 from LBR, resulting in destabilization of the nuclear envelope. Phosphorylated by host PKC. Phosphorylation alters the stability and may also have an impact on the subcellular location.

The protein localises to the host cytoplasm. It is found in the host nucleus membrane. Its subcellular location is the host rough endoplasmic reticulum membrane. The protein resides in the host cell membrane. Alters the structure of the nuclear envelope by interacting with host CBX5 and disrupting CBX5 association with LBR. Involved in the perinuclear-nuclear localization of the capsid protein VP1 during virion assembly and maturation. Plays an important role in the release of progeny virions from infected cells and in viral propagation, probably by acting as a viral ionic channel in the host plasma membrane. Allows influx of extracellular calcium ions in the host cell. May contribute to viral genome transcription and translation of viral late proteins. The sequence is that of Agnoprotein from Homo sapiens (Human).